The primary structure comprises 376 residues: Chaperone protein DnaJ (376 aa).

Residues 5–70 enclose the J domain; that stretch reads DYYEVLGVAK…QKRAAYDQYG (66 aa). The segment at 136 to 214 adopts a CR-type zinc-finger fold; the sequence is GYDTQIRVPS…CHGSGKVKET (79 aa). Residues Cys149, Cys152, Cys166, Cys169, Cys188, Cys191, Cys202, and Cys205 each coordinate Zn(2+). CXXCXGXG motif repeat units lie at residues 149–156, 166–173, 188–195, and 202–209; these read CGICHGSG, CPTCHGQG, CPKCHGTG, and CVHCHGSG.

Belongs to the DnaJ family. In terms of assembly, homodimer. It depends on Zn(2+) as a cofactor.

It localises to the cytoplasm. Its function is as follows. Participates actively in the response to hyperosmotic and heat shock by preventing the aggregation of stress-denatured proteins and by disaggregating proteins, also in an autonomous, DnaK-independent fashion. Unfolded proteins bind initially to DnaJ; upon interaction with the DnaJ-bound protein, DnaK hydrolyzes its bound ATP, resulting in the formation of a stable complex. GrpE releases ADP from DnaK; ATP binding to DnaK triggers the release of the substrate protein, thus completing the reaction cycle. Several rounds of ATP-dependent interactions between DnaJ, DnaK and GrpE are required for fully efficient folding. Also involved, together with DnaK and GrpE, in the DNA replication of plasmids through activation of initiation proteins. The polypeptide is Chaperone protein DnaJ (Burkholderia thailandensis (strain ATCC 700388 / DSM 13276 / CCUG 48851 / CIP 106301 / E264)).